Here is a 272-residue protein sequence, read N- to C-terminus: Indole-3-glycerol phosphate synthase (272 aa).

It belongs to the TrpC family.

It catalyses the reaction 1-(2-carboxyphenylamino)-1-deoxy-D-ribulose 5-phosphate + H(+) = (1S,2R)-1-C-(indol-3-yl)glycerol 3-phosphate + CO2 + H2O. It functions in the pathway amino-acid biosynthesis; L-tryptophan biosynthesis; L-tryptophan from chorismate: step 4/5. The chain is Indole-3-glycerol phosphate synthase from Mycobacterium ulcerans (strain Agy99).